The following is a 282-amino-acid chain: Putative 4-diphosphocytidyl-2-C-methyl-D-erythritol kinase (282 aa).

The active site involves lysine 9. 93–103 (PVSAGLAGGSA) provides a ligand contact to ATP. The active site involves aspartate 135.

The protein belongs to the GHMP kinase family. IspE subfamily.

The enzyme catalyses 4-CDP-2-C-methyl-D-erythritol + ATP = 4-CDP-2-C-methyl-D-erythritol 2-phosphate + ADP + H(+). In terms of biological role, catalyzes the phosphorylation of the position 2 hydroxy group of 4-diphosphocytidyl-2C-methyl-D-erythritol. This Staphylococcus haemolyticus (strain JCSC1435) protein is Putative 4-diphosphocytidyl-2-C-methyl-D-erythritol kinase.